The sequence spans 21 residues: Testis ecdysiotropin peptide 1 (21 aa).

The segment at 1–21 (ISDFDEYEPLNDADNNEVLDF) is disordered.

Its function is as follows. Start or boost ecdysteroid synthesis in testis of larvae and pupae. The chain is Testis ecdysiotropin peptide 1 from Lymantria dispar (Gypsy moth).